The following is a 287-amino-acid chain: tRNA selenocysteine 1-associated protein 1 (287 aa).

2 RRM domains span residues 3 to 86 and 96 to 175; these read ASLW…YATY and YSLF…VAIP.

Belongs to the RRM TRSPAP family. Component of the tRNA(Sec) complex composed at least of EEFSEC, SECISBP2, SEPHS1, SEPSECS, TRNAU1AP and tRNA(Sec). Associates with mRNP and/or polysomes. Found in a complex with tRNA(Sec). Interacts with SEPSECS. Ubiquitous.

It is found in the nucleus. It localises to the cytoplasm. Its function is as follows. Involved in the early steps of selenocysteine biosynthesis and tRNA(Sec) charging to the later steps resulting in the cotranslational incorporation of selenocysteine into selenoproteins. Stabilizes the SECISBP2, EEFSEC and tRNA(Sec) complex. May be involved in the methylation of tRNA(Sec). Enhances efficiency of selenoproteins synthesis. The polypeptide is tRNA selenocysteine 1-associated protein 1 (Trnau1ap) (Rattus norvegicus (Rat)).